Consider the following 5251-residue polypeptide: Dynein heavy chain-like protein 2 (5251 aa).

5 Kelch repeats span residues 37 to 87 (GLFL…CYHN), 95 to 143 (YVII…LQNG), 266 to 317 (SLIL…IHGN), 318 to 367 (NLFI…LVES), and 372 to 421 (IIFI…QNNE). Positions 140–188 (LQNGINGTNEKGYISQTDDENCSDNKYGENQDYGSNDSDSKDGEDIDKD) are disordered. The disordered stretch occupies residues 686 to 732 (NNIEQRNNNNDNNDNNNNDNNNNNNNDNNNNNNNNNNNNNNNNDNLN). Low complexity predominate over residues 692-730 (NNNNDNNDNNNNDNNNNNNNDNNNNNNNNNNNNNNNNDN). Coiled coils occupy residues 1155–1225 (DNII…KKIK) and 1544–1610 (KLNN…KLIS). The disordered stretch occupies residues 1554–1598 (EKNKNANENSNEIETNKYNKKEELTNNRDGDGDDDDNIKNDKDEK). A compositionally biased stretch (basic and acidic residues) spans 1567–1583 (ETNKYNKKEELTNNRDG). One copy of the Kelch 6 repeat lies at 1639–1685 (HIKYTLKYYITNLFRLKDLFNNEKEKWIDENYLAQVFILCNTIFFVN). The segment at 1802 to 1825 (HQEGKQEYNNKNNDNDNNNNNNNN) is disordered. A compositionally biased stretch (low complexity) spans 1810-1825 (NNKNNDNDNNNNNNNN). ATP is bound at residue 1895 to 1902 (GPAGTGKT). Residues 2136–2188 (NDINENKKEKDNIEELKSDNVKEEKKTKKKHLEDNNNNKKKELFNLNNIEKEL) are a coiled coil. Positions 2152–2171 (KSDNVKEEKKTKKKHLEDNN) are disordered. 2224-2231 (GEAGCGKT) provides a ligand contact to ATP. Residues 2447–2494 (VIWCFGGFLGEKDNVNYKKSFDKYWKNTFKSIKVNRKISVFDFYVENN) form a Kelch 7 repeat. Residues 2546–2553 (GKTGVGKT) and 2890–2897 (GIGGCGKT) each bind ATP. 2 stretches are compositionally biased toward low complexity: residues 3138–3154 (DNNN…DGNN) and 3652–3671 (DQNF…NSTN). 6 disordered regions span residues 3138-3163 (DNNN…EGND), 3652-3686 (DQNF…NHNN), 4042-4250 (EDND…EENV), 4280-4299 (NGKI…DFEN), 4773-4824 (MDFH…ENEE), and 4910-4948 (KIIK…HSGS). A compositionally biased stretch (acidic residues) spans 4059 to 4086 (KMEDEEKMEEEKVDEEKMEEEKVDEEKM). Residues 4087-4247 (EDEKVEEKME…EKGEEQKAEE (161 aa)) show a composition bias toward basic and acidic residues. Composition is skewed to acidic residues over residues 4289–4299 (DDLEEEEDFEN) and 4807–4823 (DDDD…EENE). A compositionally biased stretch (basic and acidic residues) spans 4912–4937 (IKKEKPGDNKDNKYTHDQKKETIHKE).

Belongs to the dynein heavy chain family. As to quaternary structure, consists of at least two heavy chains and a number of intermediate and light chains.

It is found in the cytoplasm. Its subcellular location is the cytoskeleton. Functionally, acts as a motor for the intracellular retrograde motility of vesicles and organelles along microtubules. Dynein has ATPase activity; the force-producing power stroke is thought to occur on release of ADP. The polypeptide is Dynein heavy chain-like protein 2 (Plasmodium falciparum (isolate 3D7)).